A 287-amino-acid chain; its full sequence is Telomere repeat-binding factor 5 (287 aa).

Positions 1–62 constitute an HTH myb-type domain; the sequence is MGNQKLKWTA…WRNLSVPPGT (62 aa). A DNA-binding region (H-T-H motif) is located at residues 28–58; the sequence is WKNILRDPEFADQLIHRSNIDLKDKWRNLSV. The tract at residues 58-107 is disordered; sequence VPPGTQSLTNKARPAKVKEEGDTPAADANDAVTIPRPIPTIPPPPGRRTL. The span at 93 to 103 shows a compositional bias: pro residues; it reads RPIPTIPPPPG. Residues 119–193 form the H15 domain; the sequence is NAPRYDGVIF…SIQNFYKIPD (75 aa). The stretch at 233–259 forms a coiled coil; that stretch reads AACKVVEAENKIDVAKLAAEEFEKMTK.

It belongs to the histone H1/H5 family. SMH subfamily.

The protein localises to the nucleus. Its subcellular location is the chromosome. In terms of biological role, binds preferentially double-stranded telomeric repeats. This chain is Telomere repeat-binding factor 5, found in Arabidopsis thaliana (Mouse-ear cress).